The primary structure comprises 139 residues: MGITALAFDFGTKSIGCAIGQSITGTAQALPAFKAQDGIPNWEAIEKCLKEWKPDVVIVGLPLNMDGTEQDLTLRARKFANRLQGRFGVNVHLQDERLTTTQARSEIFERGGFKALKKGKIDGVSACLILESWFEYAEY.

The protein belongs to the YqgF nuclease family.

Its subcellular location is the cytoplasm. Its function is as follows. Could be a nuclease involved in processing of the 5'-end of pre-16S rRNA. This chain is Putative pre-16S rRNA nuclease, found in Haemophilus influenzae (strain 86-028NP).